The following is a 319-amino-acid chain: Aspartate carbamoyltransferase catalytic subunit (319 aa).

Carbamoyl phosphate contacts are provided by Arg-54 and Thr-55. Residue Lys-82 coordinates L-aspartate. Carbamoyl phosphate is bound by residues Arg-104, His-134, and Gln-137. Residues Arg-171 and Arg-227 each coordinate L-aspartate. Residues Gly-271 and Pro-272 each contribute to the carbamoyl phosphate site.

It belongs to the aspartate/ornithine carbamoyltransferase superfamily. ATCase family. Heterododecamer (2C3:3R2) of six catalytic PyrB chains organized as two trimers (C3), and six regulatory PyrI chains organized as three dimers (R2).

The enzyme catalyses carbamoyl phosphate + L-aspartate = N-carbamoyl-L-aspartate + phosphate + H(+). It participates in pyrimidine metabolism; UMP biosynthesis via de novo pathway; (S)-dihydroorotate from bicarbonate: step 2/3. Its function is as follows. Catalyzes the condensation of carbamoyl phosphate and aspartate to form carbamoyl aspartate and inorganic phosphate, the committed step in the de novo pyrimidine nucleotide biosynthesis pathway. In Kineococcus radiotolerans (strain ATCC BAA-149 / DSM 14245 / SRS30216), this protein is Aspartate carbamoyltransferase catalytic subunit.